The primary structure comprises 102 residues: Small ribosomal subunit protein uS10 (102 aa).

This sequence belongs to the universal ribosomal protein uS10 family. As to quaternary structure, part of the 30S ribosomal subunit.

Its function is as follows. Involved in the binding of tRNA to the ribosomes. The chain is Small ribosomal subunit protein uS10 from Levilactobacillus brevis (strain ATCC 367 / BCRC 12310 / CIP 105137 / JCM 1170 / LMG 11437 / NCIMB 947 / NCTC 947) (Lactobacillus brevis).